Here is a 310-residue protein sequence, read N- to C-terminus: MESTQQMVSSIINTSFEAAVVAATSTLELMGIQYDYNEVFTRVKSKFDYVMDDSGVKNNLLGKAITIDQALNGKFGSAIRNRNWMTDSKTVAKLDEDVNKLRMTLSSKGIDQKMRVLNACFSVKRIPGKSSSIIKCTRLMKDKIERGEVEVDDSYVDEKMEIDTIDWKSRYDQLEKRFESLKQRVNEKYNTWVQKAKKVNENMYSLQNVISQQQNQIADLQQYCNKLEADLQGKFSSLVSSVEWYLRSMELPDDVKNDIEQQLNSIDLINPINAIDDIESLIRNLIQDYDRTFLMLKGLLKQCNYEYAYE.

The interval 1 to 146 (MESTQQMVSS…TRLMKDKIER (146 aa)) is RNA-binding. The dimerization stretch occupies residues 147 to 203 (GEVEVDDSYVDEKMEIDTIDWKSRYDQLEKRFESLKQRVNEKYNTWVQKAKKVNENM). Positions 163–234 (DTIDWKSRYD…NKLEADLQGK (72 aa)) form a coiled coil. Residues 167–231 (WKSRYDQLEK…QYCNKLEADL (65 aa)) are interaction with host ZC3H7B. The interaction with host EIF4G1 stretch occupies residues 205–310 (SLQNVISQQQ…KQCNYEYAYE (106 aa)).

It belongs to the rotavirus NSP3 family. Homodimer. Interacts (via the coiled-coil region) with host ZC3H7B (via LD motif). Interacts with host EIF4G1.

It localises to the host cytoplasm. Functionally, plays an important role in stimulating the translation of viral mRNAs. These mRNAs are capped but not polyadenylated, instead terminating in a conserved sequence 'GACC' at the 3' that is recognized by NSP3, which competes with host PABPC1 for EIF4G1 binding. The interaction between NSP3 and host EIF4G1 stabilizes the EIF4E-EIF4G1 interaction, thereby facilitating the initiation of capped mRNA translation. This is Non-structural protein 3 from Rotavirus A (strain RVA/Human/United States/M/1976/G3P[X]) (RV-A).